The chain runs to 394 residues: S-adenosylmethionine synthase (394 aa).

Glutamate 10 is a binding site for Mg(2+). An ATP-binding site is contributed by histidine 16. K(+) is bound at residue glutamate 44. Residues glutamate 57 and glutamine 100 each coordinate L-methionine. Residues 168 to 170 (DGK), 236 to 239 (SGRF), aspartate 247, 253 to 254 (RK), alanine 270, lysine 274, and lysine 278 each bind ATP. Aspartate 247 serves as a coordination point for L-methionine. Residue lysine 278 participates in L-methionine binding.

The protein belongs to the AdoMet synthase family. In terms of assembly, homotetramer. Mn(2+) serves as cofactor. The cofactor is Mg(2+). Requires Co(2+) as cofactor. It depends on K(+) as a cofactor.

Its subcellular location is the cytoplasm. It carries out the reaction L-methionine + ATP + H2O = S-adenosyl-L-methionine + phosphate + diphosphate. It participates in amino-acid biosynthesis; S-adenosyl-L-methionine biosynthesis; S-adenosyl-L-methionine from L-methionine: step 1/1. In terms of biological role, catalyzes the formation of S-adenosylmethionine from methionine and ATP. The reaction comprises two steps that are both catalyzed by the same enzyme: formation of S-adenosylmethionine (AdoMet) and triphosphate, and subsequent hydrolysis of the triphosphate. The sequence is that of S-adenosylmethionine synthase (METK) from Medicago truncatula (Barrel medic).